The chain runs to 447 residues: Phosphoglucosamine mutase (447 aa).

Serine 104 (phosphoserine intermediate) is an active-site residue. Mg(2+)-binding residues include serine 104, aspartate 243, aspartate 245, and aspartate 247. Serine 104 is modified (phosphoserine).

It belongs to the phosphohexose mutase family. The cofactor is Mg(2+). Post-translationally, activated by phosphorylation.

It catalyses the reaction alpha-D-glucosamine 1-phosphate = D-glucosamine 6-phosphate. Catalyzes the conversion of glucosamine-6-phosphate to glucosamine-1-phosphate. This Corynebacterium efficiens (strain DSM 44549 / YS-314 / AJ 12310 / JCM 11189 / NBRC 100395) protein is Phosphoglucosamine mutase.